Consider the following 713-residue polypeptide: Undecaprenyl-diphosphooligosaccharide--protein glycotransferase (713 aa).

Residues 1–11 (MLKKEYLKNPY) are Cytoplasmic-facing. A helical transmembrane segment spans residues 12–35 (LVLFAMIVLAYVFSVFCRFYWVWW). At 36–96 (ASEFNEYFFN…YWLYKITPFS (61 aa)) the chain is on the periplasmic side. Positions 52 to 54 (SND) match the DXD motif 1 motif. Aspartate 54 is a binding site for Mn(2+). The helical transmembrane segment at 97 to 122 (FESIILYMSTFLSSLVVIPIILLANE) threads the bilayer. Over 123–125 (YKR) the chain is Cytoplasmic. A helical transmembrane segment spans residues 126–144 (PLMGFVAALLASVANSYYN). Residues 145-152 (RTMSGYYD) lie on the Periplasmic side of the membrane. Aspartate 152 lines the Mn(2+) pocket. The DXD motif 2 signature appears at 152–154 (DTD). The chain crosses the membrane as a helical span at residues 153 to 174 (TDMLVIVLPMFILFFMVRMILK). At 175–176 (KD) the chain is on the cytoplasmic side. Residues 177–192 (FFSLIALPLFIGIYLW) form a helical membrane-spanning segment. Residues 193 to 197 (WYPSS) are Periplasmic-facing. 194–196 (YPS) contacts [alpha-D-GalNAc-(1-&gt;4)]2-[beta-D-Glc-(1-&gt;3)]-[alpha-D-GalNAc-(1-&gt;4)]2-alpha-D-GalNAc-(1-&gt;3)-alpha-D-diNAcBac-tri-trans,hepta-cis-undecaprenyl diphosphate. A helical membrane pass occupies residues 198-215 (YTLNVALIGLFLIYTLIF). Over 216-220 (HRKEK) the chain is Cytoplasmic. A helical membrane pass occupies residues 221–233 (IFYIAVILSSLTL). The Periplasmic portion of the chain corresponds to 234–237 (SNIA). A helical membrane pass occupies residues 238 to 254 (WFYQSAIIVILFALFAL). Over 255-260 (EQKRLN) the chain is Cytoplasmic. Residues 261–278 (FMIIGILGSATLIFLILS) form a helical membrane-spanning segment. Topologically, residues 279-324 (GGVDPILYQLKFYIFRSDESANLTQGFMYFNVNQTIQEVENVDFSE) are periplasmic. Tyrosine 291 is a [alpha-D-GalNAc-(1-&gt;4)]2-[beta-D-Glc-(1-&gt;3)]-[alpha-D-GalNAc-(1-&gt;4)]2-alpha-D-GalNAc-(1-&gt;3)-alpha-D-diNAcBac-tri-trans,hepta-cis-undecaprenyl diphosphate binding site. The TIXE motif signature appears at 313–316 (TIQE). Glutamate 316 lines the Mn(2+) pocket. The helical transmembrane segment at 325 to 347 (FMRRISGSEIVFLFSLFGFVWLL) threads the bilayer. The Cytoplasmic portion of the chain corresponds to 348 to 352 (RKHKS). Residues 353–369 (MIMALPILVLGFLALKG) traverse the membrane as a helical segment. The Periplasmic portion of the chain corresponds to 370–373 (GLRF). [alpha-D-GalNAc-(1-&gt;4)]2-[beta-D-Glc-(1-&gt;3)]-[alpha-D-GalNAc-(1-&gt;4)]2-alpha-D-GalNAc-(1-&gt;3)-alpha-D-diNAcBac-tri-trans,hepta-cis-undecaprenyl diphosphate is bound at residue arginine 372. A helical transmembrane segment spans residues 374 to 396 (TIYSVPVMALGFGFLLSEFKAIL). Residues 397 to 406 (VKKYSQLTSN) are Cytoplasmic-facing. A helical membrane pass occupies residues 407 to 427 (VCIVFATILTLAPVFIHIYNY). Residues 428-713 (KAPTVFSQNE…RDAKVFKLKI (286 aa)) are Periplasmic-facing. Positions 457–459 (WWD) are interacts with target acceptor peptide in protein substrate. Residues 457–461 (WWDYG) carry the WWDYG motif motif. A [alpha-D-GalNAc-(1-&gt;4)]2-[beta-D-Glc-(1-&gt;3)]-[alpha-D-GalNAc-(1-&gt;4)]2-alpha-D-GalNAc-(1-&gt;3)-alpha-D-diNAcBac-tri-trans,hepta-cis-undecaprenyl diphosphate-binding site is contributed by tyrosine 462. An N-linked (DATDGlc) asparagine glycan is attached at asparagine 534. An MI motif motif is present at residues 568–575 (MSLIFSTV).

It belongs to the STT3 family. It depends on Mg(2+) as a cofactor. The cofactor is Mn(2+).

The protein resides in the cell inner membrane. It catalyses the reaction tritrans,heptacis-undecaprenyl diphosphooligosaccharide + [protein]-L-asparagine = tritrans,heptacis-undecaprenyl diphosphate + a glycoprotein with the oligosaccharide chain attached by N-beta-D-glycosyl linkage to protein L-asparagine.. It functions in the pathway protein modification; protein glycosylation. In terms of biological role, oligosaccharyl transferase (OST) that catalyzes the initial transfer of a defined glycan (GalNAc(2)GlcGalNAc(3)Bac(NAc)(2) in eubacteria, where Bac(NAc)(2) is di-N-acetyl bacillosamine) from the lipid carrier undecaprenol-pyrophosphate to an asparagine residue within an Asp/Glu-Asn-X-Ser/Thr consensus motif in nascent polypeptide chains, the first step in protein N-glycosylation. In Campylobacter jejuni subsp. jejuni serotype O:2 (strain ATCC 700819 / NCTC 11168), this protein is Undecaprenyl-diphosphooligosaccharide--protein glycotransferase (pglB).